The following is a 456-amino-acid chain: Alcohol acyl transferase 1 allele GSc (456 aa).

Active-site proton acceptor residues include His165 and Asn386.

The protein belongs to the plant acyltransferase family. As to expression, expressed at very low levels in the skin of ripe fruit.

Functionally, involved in the biosynthesis of volatile esters which confer ripe apple fruit flavor. Alcohol acyl transferase that can use a wide range of alcohols as substrate to produce esters. The protein is Alcohol acyl transferase 1 allele GSc of Malus domestica (Apple).